A 91-amino-acid chain; its full sequence is UPF0335 protein BRADO1188 (91 aa).

Belongs to the UPF0335 family.

This is UPF0335 protein BRADO1188 from Bradyrhizobium sp. (strain ORS 278).